Consider the following 106-residue polypeptide: UPF0145 protein Fphi_1781 (106 aa).

The protein belongs to the UPF0145 family.

This Francisella philomiragia subsp. philomiragia (strain ATCC 25017 / CCUG 19701 / FSC 153 / O#319-036) protein is UPF0145 protein Fphi_1781.